The sequence spans 628 residues: DNA mismatch repair protein MutL (628 aa).

The tract at residues 335–411 is disordered; sequence SVDIEPESEQ…ASRNSEVSLP (77 aa). The segment covering 343-353 has biased composition (polar residues); the sequence is EQTTAWQTSPT.

The protein belongs to the DNA mismatch repair MutL/HexB family.

Functionally, this protein is involved in the repair of mismatches in DNA. It is required for dam-dependent methyl-directed DNA mismatch repair. May act as a 'molecular matchmaker', a protein that promotes the formation of a stable complex between two or more DNA-binding proteins in an ATP-dependent manner without itself being part of a final effector complex. This is DNA mismatch repair protein MutL from Shewanella pealeana (strain ATCC 700345 / ANG-SQ1).